Consider the following 188-residue polypeptide: Abscisic acid receptor PYL8 (188 aa).

The interval 25 to 176 (HELVDNQCSS…NLKSLADISE (152 aa)) is START-like. C32 and C157 form a disulfide bridge. An abscisate-binding site is contributed by K61. Position 77 is a phosphothreonine; by CARK1 (T77). A Gate loop motif is present at residues 85–89 (SGLPA). Abscisate is bound by residues 89–94 (ATRSTE), 116–122 (RLKNYSS), and E141. The short motif at 115–117 (HRL) is the Latch loop element.

It belongs to the PYR/PYL/RCAR abscisic acid intracellular receptor family. Monomer. Homodimer. Binds ABA on one subunit only. interacts with ABI1 and HAB1, and possibly with other PP2Cs. Binds to CARs protein in an ABA-independent manner, both at the plasma membrane and in the nucleus. Interacts directly with CAR1 and CAR4. Interacts with MYB44, MYB73 and MYB77 in an ABA-independent manner. Interacts with DDA1. Interacts with CARK1 in the cytosol. Binds to ABI1 when phosphorylated by CARK1. Interacts with AIP1 in the nucleus. In terms of processing, phosphorylated by CARK1 especially in response to abscisic acid (ABA); this phosphorylation promotes its stability and inhibitory ability to ABI1. Post-translationally, ubiquitinated in DDA1- and CDD complex-dependent manner. Ubiquitination leads to its subsequent proteasomal degradation.

Its subcellular location is the cytoplasm. It is found in the cytosol. The protein localises to the nucleus. The protein resides in the cell membrane. In terms of biological role, receptor for abscisic acid (ABA) required for ABA-mediated responses such as stomatal closure and germination inhibition. Inhibits the activity of group-A protein phosphatases type 2C (PP2Cs) in an ABA-independent manner but more efficiently when activated by ABA. Confers enhanced sensitivity to ABA. Can be activated by both (-)-ABA and (+)-ABA. Mediates crosstalk between ABA and auxin signaling to regulate lateral root growth. Required for lateral root growth suppression by ABA. In response to auxin, promotes lateral root growth by enhancing MYB77-dependent transcription of the auxin-responsive gene IAA19. Enhances the abilities of MYB44 and MYB73 to activate IAA19 gene. The sequence is that of Abscisic acid receptor PYL8 from Arabidopsis thaliana (Mouse-ear cress).